A 334-amino-acid chain; its full sequence is Holliday junction branch migration complex subunit RuvB (334 aa).

The tract at residues 1–182 (MDERLVSSEA…FGVLSRLEYY (182 aa)) is large ATPase domain (RuvB-L). ATP is bound by residues L21, R22, G63, K66, T67, T68, 129-131 (EDF), R172, Y182, and R219. T67 provides a ligand contact to Mg(2+). The tract at residues 183–253 (TQEELTDIVS…IAHDALERLQ (71 aa)) is small ATPAse domain (RuvB-S). The tract at residues 256 to 334 (ALGLDHIDHK…HFRLEAPARD (79 aa)) is head domain (RuvB-H). Residues R311 and R316 each coordinate DNA.

This sequence belongs to the RuvB family. As to quaternary structure, homohexamer. Forms an RuvA(8)-RuvB(12)-Holliday junction (HJ) complex. HJ DNA is sandwiched between 2 RuvA tetramers; dsDNA enters through RuvA and exits via RuvB. An RuvB hexamer assembles on each DNA strand where it exits the tetramer. Each RuvB hexamer is contacted by two RuvA subunits (via domain III) on 2 adjacent RuvB subunits; this complex drives branch migration. In the full resolvosome a probable DNA-RuvA(4)-RuvB(12)-RuvC(2) complex forms which resolves the HJ.

The protein localises to the cytoplasm. The catalysed reaction is ATP + H2O = ADP + phosphate + H(+). In terms of biological role, the RuvA-RuvB-RuvC complex processes Holliday junction (HJ) DNA during genetic recombination and DNA repair, while the RuvA-RuvB complex plays an important role in the rescue of blocked DNA replication forks via replication fork reversal (RFR). RuvA specifically binds to HJ cruciform DNA, conferring on it an open structure. The RuvB hexamer acts as an ATP-dependent pump, pulling dsDNA into and through the RuvAB complex. RuvB forms 2 homohexamers on either side of HJ DNA bound by 1 or 2 RuvA tetramers; 4 subunits per hexamer contact DNA at a time. Coordinated motions by a converter formed by DNA-disengaged RuvB subunits stimulates ATP hydrolysis and nucleotide exchange. Immobilization of the converter enables RuvB to convert the ATP-contained energy into a lever motion, pulling 2 nucleotides of DNA out of the RuvA tetramer per ATP hydrolyzed, thus driving DNA branch migration. The RuvB motors rotate together with the DNA substrate, which together with the progressing nucleotide cycle form the mechanistic basis for DNA recombination by continuous HJ branch migration. Branch migration allows RuvC to scan DNA until it finds its consensus sequence, where it cleaves and resolves cruciform DNA. The polypeptide is Holliday junction branch migration complex subunit RuvB (Bacillus velezensis (strain DSM 23117 / BGSC 10A6 / LMG 26770 / FZB42) (Bacillus amyloliquefaciens subsp. plantarum)).